The sequence spans 1107 residues: Lon protease homolog, mitochondrial (1107 aa).

A mitochondrion-targeting transit peptide spans 1-31 (MLSRQRIPRILASRTSLAHSIRSFTSTTSSI). Disordered stretches follow at residues 32-152 (RPVA…PGDK) and 273-329 (PEAA…PYEP). Polar residues predominate over residues 51–60 (TNLSSFSTYT). Basic and acidic residues predominate over residues 80-101 (EEERKANVEHAEAEAKEAESKQ). Gly residues predominate over residues 122-141 (GAAGGSSAGSGSGADGGSGD). The span at 142–152 (GGKRGRKPGDK) shows a compositional bias: basic and acidic residues. One can recognise a Lon N-terminal domain in the interval 166 to 441 (VMAIPIAKRP…KALLVLKKEH (276 aa)). 594 to 601 (GPPGVGKT) provides a ligand contact to ATP. The tract at residues 808–858 (PESEALTEEGKAAQEETEKKKSEEAASGETSSPKAATEASEKETTEKPRVA) is disordered. Over residues 815 to 831 (EEGKAAQEETEKKKSEE) the composition is skewed to basic and acidic residues. Residues 832-845 (AASGETSSPKAATE) show a composition bias toward low complexity. Residues 846–856 (ASEKETTEKPR) are compositionally biased toward basic and acidic residues. The Lon proteolytic domain maps to 891–1077 (VTPPGVTMGL…SEVFDLIFPK (187 aa)). Active-site residues include S983 and K1026. The segment at 1085 to 1107 (KSRIIEDDKSEKEESKKKNDDDE) is disordered.

The protein belongs to the peptidase S16 family. As to quaternary structure, homohexamer or homoheptamer. Organized in a ring with a central cavity.

It is found in the mitochondrion matrix. It catalyses the reaction Hydrolysis of proteins in presence of ATP.. ATP-dependent serine protease that mediates the selective degradation of misfolded, unassembled or oxidatively damaged polypeptides as well as certain short-lived regulatory proteins in the mitochondrial matrix. May also have a chaperone function in the assembly of inner membrane protein complexes. Participates in the regulation of mitochondrial gene expression and in the maintenance of the integrity of the mitochondrial genome. Binds to mitochondrial DNA in a site-specific manner. The sequence is that of Lon protease homolog, mitochondrial (pim1) from Neurospora crassa (strain ATCC 24698 / 74-OR23-1A / CBS 708.71 / DSM 1257 / FGSC 987).